The sequence spans 306 residues: Probable arylamine N-acetyltransferase 3 (306 aa).

Cysteine 75 acts as the Acyl-thioester intermediate in catalysis. Active-site residues include histidine 115 and aspartate 130.

Belongs to the arylamine N-acetyltransferase family.

The catalysed reaction is an arylamine + acetyl-CoA = an N-acetylarylamine + CoA. The sequence is that of Probable arylamine N-acetyltransferase 3 from Dictyostelium discoideum (Social amoeba).